The primary structure comprises 88 residues: Small ribosomal subunit protein bS16 (88 aa).

This sequence belongs to the bacterial ribosomal protein bS16 family.

This Geotalea daltonii (strain DSM 22248 / JCM 15807 / FRC-32) (Geobacter daltonii) protein is Small ribosomal subunit protein bS16.